The following is an 89-amino-acid chain: Heat shock protein 30A (89 aa).

Composition is skewed to basic and acidic residues over residues 1–11 (MRNNVERRMQR) and 19–39 (LSKD…RESE). A disordered region spans residues 1 to 55 (MRNNVERRMQRVNEACRLLSKDTEMRRITDQNRQSRESEGTSPNSGKDGKDHFEL). A sHSP domain is found at 35–89 (SRESEGTSPNSGKDGKDHFELTLNVRDFSPHELTVKTQGRRVIVTGKHERKSDTE).

It belongs to the small heat shock protein (HSP20) family.

This is Heat shock protein 30A (hsp30a) from Xenopus laevis (African clawed frog).